Reading from the N-terminus, the 565-residue chain is NAD-dependent malic enzyme (565 aa).

Y104 serves as the catalytic Proton donor. Residue R157 coordinates NAD(+). Residue K175 is the Proton acceptor of the active site. A divalent metal cation is bound by residues E246, D247, and D270. Residues D270 and N418 each contribute to the NAD(+) site.

Belongs to the malic enzymes family. As to quaternary structure, homotetramer. Mg(2+) serves as cofactor. Requires Mn(2+) as cofactor.

It catalyses the reaction (S)-malate + NAD(+) = pyruvate + CO2 + NADH. The catalysed reaction is oxaloacetate + H(+) = pyruvate + CO2. This Yersinia enterocolitica serotype O:8 / biotype 1B (strain NCTC 13174 / 8081) protein is NAD-dependent malic enzyme.